The primary structure comprises 213 residues: RNA chaperone ProQ (213 aa).

The segment at glutamate 105 to alanine 150 is disordered. The segment covering alanine 115–alanine 127 has biased composition (low complexity).

The protein belongs to the ProQ family.

It localises to the cytoplasm. In terms of biological role, RNA chaperone with significant RNA binding, RNA strand exchange and RNA duplexing activities. The chain is RNA chaperone ProQ from Shewanella oneidensis (strain ATCC 700550 / JCM 31522 / CIP 106686 / LMG 19005 / NCIMB 14063 / MR-1).